A 132-amino-acid polypeptide reads, in one-letter code: NADPH-dependent 7-cyano-7-deazaguanine reductase (132 aa).

Cys-48 functions as the Thioimide intermediate in the catalytic mechanism. Asp-55 acts as the Proton donor in catalysis. Substrate-binding positions include 70–72 (LEL) and 89–90 (ME).

This sequence belongs to the GTP cyclohydrolase I family. QueF type 1 subfamily.

Its subcellular location is the cytoplasm. The enzyme catalyses 7-aminomethyl-7-carbaguanine + 2 NADP(+) = 7-cyano-7-deazaguanine + 2 NADPH + 3 H(+). Its pathway is tRNA modification; tRNA-queuosine biosynthesis. Catalyzes the NADPH-dependent reduction of 7-cyano-7-deazaguanine (preQ0) to 7-aminomethyl-7-deazaguanine (preQ1). This chain is NADPH-dependent 7-cyano-7-deazaguanine reductase, found in Elusimicrobium minutum (strain Pei191).